A 245-amino-acid polypeptide reads, in one-letter code: Galectin-3 (245 aa).

The interval 1-30 (MADGFSLNDALAGSGNPNPQGWPGAWGNQP) is disordered. Position 2 is an N-acetylalanine (Ala-2). The residue at position 6 (Ser-6) is a Phosphoserine; by CK1. 4 consecutive repeat copies span residues 35 to 43 (YPGASYPGA), 44 to 52 (YPGQAPPGA), 53 to 61 (YPGQAPPGA), and 62 to 70 (YPGPTAPGA). Positions 35 to 99 (YPGASYPGAY…PSAPGAYPAA (65 aa)) are 7 X 9 AA tandem repeats of Y-P-G-X(3)-P-[GS]-A. Positions 47 to 68 (QAPPGAYPGQAPPGAYPGPTAP) are disordered. One copy of the 5; approximate repeat lies at 71-78 (YPGPAPGA). The stretch at 79-88 (YPGQPGASGA) is one 6; approximate repeat. Residues 89–99 (YPSAPGAYPAA) form a 7; approximate repeat. The region spanning 113–243 (YKLPLAGGVM…DITLTSAAPT (131 aa)) is the Galectin domain. 176–182 (WGREERQ) serves as a coordination point for a beta-D-galactoside. Ser-183 carries the post-translational modification Phosphoserine. Positions 221–236 (KNLREINQMEISGDIT) match the Nuclear export signal motif.

Probably forms homo- or heterodimers. Interacts with DMBT1. Interacts with CD6 and ALCAM. Forms a complex with the ITGA3, ITGB1 and CSPG4. Interacts with LGALS3BP, LYPD3, ZFTRAF1 and UACA. Interacts with TRIM16; this interaction mediates autophagy of damage endomembranes. Interacts with cargo receptor TMED10; the interaction mediates the translocation from the cytoplasm into the ERGIC (endoplasmic reticulum-Golgi intermediate compartment) and thereby secretion. Interacts with and inhibits by binding NCR3/NKp30.

It is found in the cytoplasm. The protein localises to the nucleus. The protein resides in the secreted. Galactose-specific lectin which binds IgE. May mediate with the alpha-3, beta-1 integrin the stimulation by CSPG4 of endothelial cells migration. Together with DMBT1, required for terminal differentiation of columnar epithelial cells during early embryogenesis. In the nucleus: acts as a pre-mRNA splicing factor. Involved in acute inflammatory responses including neutrophil activation and adhesion, chemoattraction of monocytes macrophages, opsonization of apoptotic neutrophils, and activation of mast cells. Together with TRIM16, coordinates the recognition of membrane damage with mobilization of the core autophagy regulators ATG16L1 and BECN1 in response to damaged endomembranes. When secreted, interacts with NK cell-activating receptor NCR3/NKp30 acting as an inhibitory ligand which antagonizes NK cell attack. The sequence is that of Galectin-3 (LGALS3) from Cricetulus longicaudatus (Long-tailed dwarf hamster).